Reading from the N-terminus, the 208-residue chain is Outer-membrane lipoprotein LolB (208 aa).

The first 23 residues, 1–23 (MKPIQKLSLFRLLPLSCVLLLTA), serve as a signal peptide directing secretion. The N-palmitoyl cysteine moiety is linked to residue cysteine 24. A lipid anchor (S-diacylglycerol cysteine) is attached at cysteine 24.

The protein belongs to the LolB family. As to quaternary structure, monomer.

The protein localises to the cell outer membrane. Its function is as follows. Plays a critical role in the incorporation of lipoproteins in the outer membrane after they are released by the LolA protein. This is Outer-membrane lipoprotein LolB from Photorhabdus laumondii subsp. laumondii (strain DSM 15139 / CIP 105565 / TT01) (Photorhabdus luminescens subsp. laumondii).